A 414-amino-acid chain; its full sequence is CinA-like protein (414 aa).

It belongs to the CinA family.

The protein is CinA-like protein of Geobacter sp. (strain M21).